We begin with the raw amino-acid sequence, 236 residues long: uncharacterized protein (236 aa).

Residues Met-1–Thr-23 form the signal peptide. The tract at residues Ser-22–Thr-62 is disordered. A compositionally biased stretch (basic and acidic residues) spans Glu-24–Lys-35.

This is an uncharacterized protein from Bacillus subtilis (strain 168).